We begin with the raw amino-acid sequence, 571 residues long: PR domain zinc finger protein 14 (571 aa).

Phosphoserine is present on Ser-79. Residues 129–191 (LGHQIIGGDN…PKPSNQEGKS (63 aa)) form a disordered region. Residues 165-176 (RTSQLLPCSPSK) are compositionally biased toward polar residues. The segment at 194 to 384 (RFQFTEEDLH…DIPVSLQVTE (191 aa)) is interaction with CBFA2T2. The region spanning 251-367 (EGLCLMQTVF…QNQELLVWYG (117 aa)) is the SET domain. The segment at 400 to 424 (YRCERCGKVFTYKYYRDKHLKYTPC) adopts a C2H2-type 1; atypical zinc-finger fold. 5 consecutive C2H2-type zinc fingers follow at residues 432 to 455 (FPCS…LHVH), 461 to 483 (HKCS…MRVH), 489 to 511 (YQCV…IRQH), 517 to 540 (FKCK…RRSH), and 546 to 568 (CSCS…MKFH).

The protein belongs to the class V-like SAM-binding methyltransferase superfamily. As to quaternary structure, interacts with CBFA2T2. Expressed in embryonic stem cells. Tends to be overexpressed in breast cancer (at protein level).

The protein localises to the nucleus. Its function is as follows. Transcription factor that has both positive and negative roles on transcription. Required for the maintenance of embryonic stem cell identity and the reacquisition of pluripotency in somatic cells. May play an essential role in germ cell development at 2 levels: the reacquisition of potential pluripotency, including SOX2 up-regulation, and successful epigenetic reprogramming, characterized by EHMT1 repression. Its association with CBFA2T2 is required for the functions in pluripotency and germ cell formation. Directly up-regulates the expression of pluripotency gene POU5F1 through its proximal enhancer. Binds to the DNA consensus sequence 5'-GGTC[TC]CTAA-3'. In Homo sapiens (Human), this protein is PR domain zinc finger protein 14 (PRDM14).